Here is a 117-residue protein sequence, read N- to C-terminus: Large ribosomal subunit protein eL30B (117 aa).

Over residues 1–14 the composition is skewed to low complexity; the sequence is MSAAPTTAPVAAVS. A disordered region spans residues 1 to 22; sequence MSAAPTTAPVAAVSKKGKKSGD.

Belongs to the eukaryotic ribosomal protein eL30 family. In terms of assembly, component of the large ribosomal subunit (LSU). Mature yeast ribosomes consist of a small (40S) and a large (60S) subunit. The 40S small subunit contains 1 molecule of ribosomal RNA (18S rRNA) and at least 33 different proteins. The large 60S subunit contains 3 rRNA molecules (25S, 5.8S and 5S rRNA) and at least 46 different proteins.

Its subcellular location is the cytoplasm. Functionally, component of the ribosome, a large ribonucleoprotein complex responsible for the synthesis of proteins in the cell. The small ribosomal subunit (SSU) binds messenger RNAs (mRNAs) and translates the encoded message by selecting cognate aminoacyl-transfer RNA (tRNA) molecules. The large subunit (LSU) contains the ribosomal catalytic site termed the peptidyl transferase center (PTC), which catalyzes the formation of peptide bonds, thereby polymerizing the amino acids delivered by tRNAs into a polypeptide chain. The nascent polypeptides leave the ribosome through a tunnel in the LSU and interact with protein factors that function in enzymatic processing, targeting, and the membrane insertion of nascent chains at the exit of the ribosomal tunnel. This chain is Large ribosomal subunit protein eL30B (rpl3002), found in Schizosaccharomyces pombe (strain 972 / ATCC 24843) (Fission yeast).